A 98-amino-acid chain; its full sequence is Cell division topological specificity factor (98 aa).

The protein belongs to the MinE family.

Prevents the cell division inhibition by proteins MinC and MinD at internal division sites while permitting inhibition at polar sites. This ensures cell division at the proper site by restricting the formation of a division septum at the midpoint of the long axis of the cell. The protein is Cell division topological specificity factor of Moorella thermoacetica (strain ATCC 39073 / JCM 9320).